The chain runs to 59 residues: Cecropin-A (59 aa).

Residues 1-23 (MNFTKLFLLIAMAVLLLTGQSEA) form the signal peptide. Residues 58-59 (GK) constitute a propeptide, removed in mature form (AeaeCec2).

In terms of tissue distribution, hemolymph (at protein level).

Its subcellular location is the secreted. Antimicrobial peptide. Antibacterial activity against Gram-negative bacteria E.coli D22 and D31, E.carotovora, K.pneumoniae, P.aeruginosa, S.typhimurium, E.cloacae B12 and X.campestris and Gram-positive bacteria A.viridans, M.luteus, B.megaterium and S.pyogenes. Possesses antifungal activity against F.oxysporum, F.culmorum and N.crassa, C.albicans, C.neoformans and S.cerevisiae. No activity against Gram-negative S.marcescens Db11, Gram-positive B.cereus, B.subtilis, B.thuringiensis, S.aureus and L.monocytogenes, the fungi A.fumigatus and B.bassiana and C.glabrata. Partially neutralizes lipopolysaccharides (LPS). Exhibits anti-inflammatory properties: inhibits LPS-induced iNOS/NOS2 transcription, nitric oxide (NO) and pro-inflammatory cytokine production in mouse macrophages and human peripheral blood mononuclear cells (PBMCs); inhibits LPS-induced activation of MAPK and NF-kappa-B signaling pathways in mouse macrophages. The protein is Cecropin-A (CECA) of Aedes aegypti (Yellowfever mosquito).